The primary structure comprises 408 residues: Beta-ureidopropionase (408 aa).

The 271-residue stretch at 90 to 360 (VRVGLIQNSI…DGLLISDMDL (271 aa)) folds into the CN hydrolase domain. The active-site Proton acceptor is the E137. K212 (proton donor) is an active-site residue. C249 serves as the catalytic Nucleophile.

It belongs to the carbon-nitrogen hydrolase superfamily. BUP family. As to quaternary structure, homodimer, homotetramer, homooctamer; can also form higher homooligomers.

Its subcellular location is the cytoplasm. The enzyme catalyses 3-(carbamoylamino)propanoate + H2O + 2 H(+) = beta-alanine + NH4(+) + CO2. It carries out the reaction 3-(carbamoylamino)-2-methylpropanoate + H2O + 2 H(+) = (R)-3-amino-2-methylpropanoate + NH4(+) + CO2. Its pathway is amino-acid biosynthesis; beta-alanine biosynthesis. In terms of biological role, catalyzes a late step in pyrimidine degradation. Converts N-carbamoyl-beta-aminoisobutyrate and N-carbamoyl-beta-alanine (3-ureidopropanoate) to, respectively, beta-aminoisobutyrate and beta-alanine, ammonia and carbon dioxide. Involved in the recycling of nitrogen from nucleobases to general nitrogen metabolism. The sequence is that of Beta-ureidopropionase from Arabidopsis thaliana (Mouse-ear cress).